Here is a 186-residue protein sequence, read N- to C-terminus: Alkyl hydroperoxide reductase AhpD (186 aa).

Cysteine 132 functions as the Proton donor in the catalytic mechanism. A disulfide bridge links cysteine 132 with cysteine 135. The Cysteine sulfenic acid (-SOH) intermediate role is filled by cysteine 135.

The protein belongs to the AhpD family.

The catalysed reaction is N(6)-[(R)-dihydrolipoyl]-L-lysyl-[lipoyl-carrier protein] + a hydroperoxide = N(6)-[(R)-lipoyl]-L-lysyl-[lipoyl-carrier protein] + an alcohol + H2O. In terms of biological role, antioxidant protein with alkyl hydroperoxidase activity. Required for the reduction of the AhpC active site cysteine residues and for the regeneration of the AhpC enzyme activity. In Anaeromyxobacter dehalogenans (strain 2CP-1 / ATCC BAA-258), this protein is Alkyl hydroperoxide reductase AhpD.